The primary structure comprises 311 residues: JNK1/MAPK8-associated membrane protein (311 aa).

Residues 1–57 (MAVDIQPACLGLYCGKTLLFKNGSSEIYGECGVCPRGQRTNAQKYCQPCTESPELYD) lie on the Lumenal side of the membrane. N22 is a glycosylation site (N-linked (GlcNAc...) asparagine). Residues 58–78 (WLYLGFMAMLPLVLHWFFIEW) form a helical membrane-spanning segment. At 79–87 (YSGKKSSSA) the chain is on the cytoplasmic side. A helical membrane pass occupies residues 88–108 (LFQHITALFECTMAAIITLLV). Over 109 to 149 (SDPVGVLYIRSCRVLMLSDWYTMLYNPSPDYVTTVHCTHEA) the chain is Lumenal. Residues 150-170 (VYPLYTIVFVYYAFCLVLMML) traverse the membrane as a helical segment. The Cytoplasmic segment spans residues 171 to 188 (LRPLLVKKIACGLGKSDR). The helical transmembrane segment at 189–209 (FKSIYAALYFFPILTVLQAVG) threads the bilayer. A topological domain (lumenal) is located at residue G210. The chain crosses the membrane as a helical span at residues 211 to 231 (GLLYYAFPYIILVLSLVTLAV). The Cytoplasmic segment spans residues 232–250 (YMSASEIENCYDLLVRKKR). The helical transmembrane segment at 251–271 (LIVLFSHWLLHAYGIVSISRV) threads the bilayer. Over 272 to 277 (DRLEHD) the chain is Lumenal. The helical transmembrane segment at 278–298 (LPLLALVPTPALFYLFTAKFT) threads the bilayer. The Cytoplasmic segment spans residues 299-311 (EPSRILSEGANGH).

Interacts with RNF5 and MAPK8, but not with MAPK9. Binding to MAPK8 occurs before and after exposure to stress, such as UV irradiation. After exposure to stress, interacts with phosphorylated MAPK8. Competes with DUSP10 for MAPK8 binding. Associates with multiple components of the proteasome and with ERAD regulatory proteins, including AMFR/GP78, CANX, PSMC1, PSMC2, PSMC3/TBP1, PSMC5, PSMC6, PSMD8, SEC61-ALPHA and UFD1. In terms of processing, ubiquitinated by RNF5 via 'Lys-63'-linked ubiquitin linkage in a UBE2N-dependent manner. Ubiquitination decreases association with components of the proteasome and ERAD. In terms of tissue distribution, expressed in numerous tissues, including brain, spleen, thymus, liver, kidney and testis.

It localises to the endoplasmic reticulum membrane. Its function is as follows. Regulates the duration of MAPK8 activity in response to various stress stimuli. Facilitates degradation of misfolded endoplasmic reticulum (ER) proteins through the recruitment of components of the proteasome and endoplasmic reticulum-associated degradation (ERAD) system. In Mus musculus (Mouse), this protein is JNK1/MAPK8-associated membrane protein (Jkamp).